Here is a 251-residue protein sequence, read N- to C-terminus: UPF0309 protein GK1441 (251 aa).

The 184-residue stretch at 31–214 folds into the SIS domain; the sequence is VSEAIQNGGI…VLMAENGIEP (184 aa).

This sequence belongs to the UPF0309 family.

This Geobacillus kaustophilus (strain HTA426) protein is UPF0309 protein GK1441.